A 526-amino-acid chain; its full sequence is Bifunctional purine biosynthesis protein PurH (526 aa).

Positions 1-149 constitute an MGS-like domain; sequence MLHSLPIRRA…KNHEAVTVVV (149 aa).

The protein belongs to the PurH family.

It catalyses the reaction (6R)-10-formyltetrahydrofolate + 5-amino-1-(5-phospho-beta-D-ribosyl)imidazole-4-carboxamide = 5-formamido-1-(5-phospho-D-ribosyl)imidazole-4-carboxamide + (6S)-5,6,7,8-tetrahydrofolate. It carries out the reaction IMP + H2O = 5-formamido-1-(5-phospho-D-ribosyl)imidazole-4-carboxamide. It participates in purine metabolism; IMP biosynthesis via de novo pathway; 5-formamido-1-(5-phospho-D-ribosyl)imidazole-4-carboxamide from 5-amino-1-(5-phospho-D-ribosyl)imidazole-4-carboxamide (10-formyl THF route): step 1/1. It functions in the pathway purine metabolism; IMP biosynthesis via de novo pathway; IMP from 5-formamido-1-(5-phospho-D-ribosyl)imidazole-4-carboxamide: step 1/1. This is Bifunctional purine biosynthesis protein PurH from Rhodospirillum rubrum (strain ATCC 11170 / ATH 1.1.1 / DSM 467 / LMG 4362 / NCIMB 8255 / S1).